Reading from the N-terminus, the 82-residue chain is Delta-actitoxin-Aeq2b 3 (82 aa).

A signal peptide spans 1-19 (MNRLMILVFAAVILALASA). A propeptide spanning residues 20–26 (DEDVDIT) is cleaved from the precursor. 3 cysteine pairs are disulfide-bonded: cysteine 32-cysteine 79, cysteine 34-cysteine 69, and cysteine 62-cysteine 80.

Belongs to the sea anemone sodium channel inhibitory toxin family. Type I subfamily.

Its subcellular location is the secreted. It is found in the nematocyst. Binds specifically to voltage-gated sodium channels (Nav), thereby delaying their inactivation during signal transduction. Causes death to crabs. This Actinia equina (Beadlet anemone) protein is Delta-actitoxin-Aeq2b 3.